Here is a 237-residue protein sequence, read N- to C-terminus: Mitochondrial inner membrane protease atp23 (237 aa).

Over residues M1 to T18 the composition is skewed to polar residues. A disordered region spans residues M1–D24. An a divalent metal cation-binding site is contributed by H136. Residue E137 is part of the active site. H140 contributes to the a divalent metal cation binding site.

This sequence belongs to the peptidase M76 family.

The protein resides in the mitochondrion inner membrane. In terms of biological role, has a dual role in the assembly of mitochondrial ATPase. Acts as a protease that removes N-terminal residues of mitochondrial ATPase CF(0) subunit 6 at the intermembrane space side. Also involved in the correct assembly of the membrane-embedded ATPase CF(0) particle, probably mediating association of subunit 6 with the subunit 9 ring. This chain is Mitochondrial inner membrane protease atp23 (atp23), found in Aspergillus niger (strain ATCC MYA-4892 / CBS 513.88 / FGSC A1513).